Here is a 114-residue protein sequence, read N- to C-terminus: T cell receptor beta variable 5-5 (114 aa).

The N-terminal stretch at 1 to 21 is a signal peptide; that stretch reads MGPGLLCWVLLCLLGAGPVDA. The 93-residue stretch at 22 to 114 folds into the Ig-like domain; the sequence is GVTQSPTHLI…SALYLCASSL (93 aa). A disulfide bridge links Cys-42 with Cys-110. N-linked (GlcNAc...) asparagine glycosylation occurs at Asn-90.

As to quaternary structure, alpha-beta TR is a heterodimer composed of an alpha and beta chain; disulfide-linked. The alpha-beta TR is associated with the transmembrane signaling CD3 coreceptor proteins to form the TR-CD3 (TcR or TCR). The assembly of alpha-beta TR heterodimers with CD3 occurs in the endoplasmic reticulum where a single alpha-beta TR heterodimer associates with one CD3D-CD3E heterodimer, one CD3G-CD3E heterodimer and one CD247 homodimer forming a stable octameric structure. CD3D-CD3E and CD3G-CD3E heterodimers preferentially associate with TR alpha and TR beta chains, respectively. The association of the CD247 homodimer is the last step of TcR assembly in the endoplasmic reticulum and is required for transport to the cell surface.

The protein resides in the cell membrane. Its function is as follows. V region of the variable domain of T cell receptor (TR) beta chain that participates in the antigen recognition. Alpha-beta T cell receptors are antigen specific receptors which are essential to the immune response and are present on the cell surface of T lymphocytes. Recognize peptide-major histocompatibility (MH) (pMH) complexes that are displayed by antigen presenting cells (APC), a prerequisite for efficient T cell adaptive immunity against pathogens. Binding of alpha-beta TR to pMH complex initiates TR-CD3 clustering on the cell surface and intracellular activation of LCK that phosphorylates the ITAM motifs of CD3G, CD3D, CD3E and CD247 enabling the recruitment of ZAP70. In turn ZAP70 phosphorylates LAT, which recruits numerous signaling molecules to form the LAT signalosome. The LAT signalosome propagates signal branching to three major signaling pathways, the calcium, the mitogen-activated protein kinase (MAPK) kinase and the nuclear factor NF-kappa-B (NF-kB) pathways, leading to the mobilization of transcription factors that are critical for gene expression and essential for T cell growth and differentiation. The T cell repertoire is generated in the thymus, by V-(D)-J rearrangement. This repertoire is then shaped by intrathymic selection events to generate a peripheral T cell pool of self-MH restricted, non-autoaggressive T cells. Post-thymic interaction of alpha-beta TR with the pMH complexes shapes TR structural and functional avidity. This is T cell receptor beta variable 5-5 from Homo sapiens (Human).